The chain runs to 577 residues: Heavy metal-associated isoprenylated plant protein 34 (577 aa).

One can recognise an HMA domain in the interval leucine 9–glutamate 72. Cysteine 20 and cysteine 23 together coordinate a metal cation. A compositionally biased stretch (gly residues) spans glycine 77 to glycine 87. Disordered regions lie at residues glycine 77 to glutamine 136 and alanine 150 to glycine 451. Low complexity predominate over residues asparagine 97–proline 106. Positions lysine 118–histidine 129 are enriched in gly residues. Residues lysine 168–alanine 177 are compositionally biased toward basic and acidic residues. Positions aspartate 178–glutamate 213 are enriched in acidic residues. The segment covering histidine 227–glycine 244 has biased composition (low complexity). Gly residues-rich tracts occupy residues glycine 245–lysine 254 and phenylalanine 266–phenylalanine 281. Basic and acidic residues-rich tracts occupy residues lysine 294–alanine 326 and asparagine 344–glycine 358. Gly residues-rich tracts occupy residues lysine 379–glycine 392 and glycine 420–glycine 451. At cysteine 574 the chain carries Cysteine methyl ester. A lipid anchor (S-farnesyl cysteine) is attached at cysteine 574. The propeptide at serine 575–methionine 577 is removed in mature form.

Belongs to the HIPP family.

Functionally, heavy-metal-binding protein. The polypeptide is Heavy metal-associated isoprenylated plant protein 34 (Arabidopsis thaliana (Mouse-ear cress)).